A 362-amino-acid polypeptide reads, in one-letter code: Heat-inducible transcription repressor HrcA (362 aa).

Belongs to the HrcA family.

Its function is as follows. Negative regulator of class I heat shock genes (grpE-dnaK-dnaJ and groELS operons). Prevents heat-shock induction of these operons. This Rhizobium johnstonii (strain DSM 114642 / LMG 32736 / 3841) (Rhizobium leguminosarum bv. viciae) protein is Heat-inducible transcription repressor HrcA.